We begin with the raw amino-acid sequence, 123 residues long: Ribonuclease P protein component (123 aa).

The protein belongs to the RnpA family. As to quaternary structure, consists of a catalytic RNA component (M1 or rnpB) and a protein subunit.

It catalyses the reaction Endonucleolytic cleavage of RNA, removing 5'-extranucleotides from tRNA precursor.. Its function is as follows. RNaseP catalyzes the removal of the 5'-leader sequence from pre-tRNA to produce the mature 5'-terminus. It can also cleave other RNA substrates such as 4.5S RNA. The protein component plays an auxiliary but essential role in vivo by binding to the 5'-leader sequence and broadening the substrate specificity of the ribozyme. This chain is Ribonuclease P protein component, found in Bordetella bronchiseptica (strain ATCC BAA-588 / NCTC 13252 / RB50) (Alcaligenes bronchisepticus).